A 569-amino-acid polypeptide reads, in one-letter code: Acyl-CoA-binding domain-containing protein 5 (569 aa).

Residues 1 to 31 form the signal peptide; that stretch reads MELFYELLLTAAASLLVAFLLARLLASAATA. The region spanning 415-506 is the ACB domain; the sequence is IEKRFGVAAA…LSEAIPGWMG (92 aa). An acyl-CoA is bound by residues Lys474 and Tyr493. Asn508 carries an N-linked (GlcNAc...) asparagine glycan. Polar residues-rich tracts occupy residues 533–544 and 552–569; these read INQHDSQGNEDN and LTSS…IPAE. A disordered region spans residues 533–569; it reads INQHDSQGNEDNTGMYEGHLTSSPNPEKGQSSDIPAE.

The protein belongs to the ACBP family. Highly expressed in seeds and leaves. Expressed at low levels in roots.

It localises to the endoplasmic reticulum. Its function is as follows. Binds medium- and long-chain acyl-CoA esters with high affinity. Can interact in vitro with palmitoyl-CoA and linolenoyl-CoA. Binds phosphatidic acid (PA) and phosphatidylcholine (PC) in vitro. May play a role in the biosynthesis of phospholipids. This chain is Acyl-CoA-binding domain-containing protein 5, found in Oryza sativa subsp. japonica (Rice).